A 436-amino-acid polypeptide reads, in one-letter code: Transcriptional regulator VdtR (436 aa).

Residues 17-44 constitute a DNA-binding region (zn(2)-C6 fungal-type); that stretch reads CDRCSANKVKCTQEKPECERCRLLSLPC. Disordered regions lie at residues 51–147 and 173–192; these read RIGK…HDKG and TARE…EYSD. Over residues 125-141 the composition is skewed to polar residues; it reads SHNSNRPTNMASTNQDQ. A compositionally biased stretch (basic and acidic residues) spans 174–192; the sequence is AREDQKQHPELRSEEEYSD.

The protein resides in the nucleus. Transcription factor that regulates expression of the viriditoxin biosynthesis cluster and viriditoxin synthesis. The sequence is that of Transcriptional regulator VdtR from Byssochlamys spectabilis (Paecilomyces variotii).